The sequence spans 423 residues: Glycine amidinotransferase, mitochondrial (423 aa).

The transit peptide at 1–43 directs the protein to the mitochondrion; that stretch reads MLRVRCLRGGSRGAEAVHYIGSRLGGSLTGWVQRTFQSTQAAT. Residues S46 and S49 each carry the phosphoserine modification. D170 serves as a coordination point for arginine. Residues D254 and H303 contribute to the active site. Residues D305, R322, S354, and S355 each contribute to the arginine site. The residue at position 385 (K385) is an N6-acetyllysine. C407 serves as the catalytic Amidino-cysteine intermediate.

This sequence belongs to the amidinotransferase family. Homodimer. As to expression, highly expressed in the kidney and pancreas, especially in the proximal tubules of the kidney, and alpha cells of the pancreatic islets (at protein level). Moderately expressed in liver hepatocytes (at protein level). Expressed in the kidney, pancreas, liver, colon, ileum, jejunum, heart and skeletal muscle. In reproductive tissues, expressed in the testis, epididymis, ovary, oviduct and uterus. Expressed throughout the brain in neurons, astrocytes and oligodendrocytes. In 12.5 dpc embryos, it is expressed in the middle part of the somites, hepatic primordium and wall of the dorsal aorta. Expressed in 15.5 dpc embryos in isolated cells throughout the central nervous system, skeletal muscles, gonad primordia, caudal somites, liver and pancreas, but not in the choroid plexus, root ganglia or kidney. Expressed in skeletal muscle, kidney, pancreas, central nervous system, liver and intestine epithelial cells, but not in epidermis, dermis, olfactory epithelium, trachea, lung, stomach or heart in 18.5 dpc embryos.

The protein localises to the mitochondrion inner membrane. It carries out the reaction L-arginine + glycine = guanidinoacetate + L-ornithine. It catalyses the reaction 4-aminobutanoate + L-arginine = 4-guanidinobutanoate + L-ornithine. The enzyme catalyses beta-alanine + L-arginine = 3-guanidinopropanoate + L-ornithine. The catalysed reaction is taurine + L-arginine = taurocyamine + L-ornithine. Its pathway is amine and polyamine biosynthesis; creatine biosynthesis; creatine from L-arginine and glycine: step 1/2. Functionally, transamidinase that catalyzes the transfer of the amidino group of L-arginine onto the amino moiety of acceptor metabolites such as glycine, beta-alanine, gamma-aminobutyric acid (GABA) and taurine yielding the corresponding guanidine derivatives. Catalyzes the rate-limiting step of creatine biosynthesis, namely the transfer of the amidino group from L-arginine to glycine to generate guanidinoacetate, which is then methylated by GAMT to form creatine. Provides creatine as a source for ATP generation in tissues with high energy demands, in particular skeletal muscle, heart and brain. This chain is Glycine amidinotransferase, mitochondrial (Gatm), found in Rattus norvegicus (Rat).